We begin with the raw amino-acid sequence, 199 residues long: Large ribosomal subunit protein bL25 (199 aa).

Belongs to the bacterial ribosomal protein bL25 family. CTC subfamily. In terms of assembly, part of the 50S ribosomal subunit; part of the 5S rRNA/L5/L18/L25 subcomplex. Contacts the 5S rRNA. Binds to the 5S rRNA independently of L5 and L18.

Its function is as follows. This is one of the proteins that binds to the 5S RNA in the ribosome where it forms part of the central protuberance. The sequence is that of Large ribosomal subunit protein bL25 from Caulobacter sp. (strain K31).